Here is a 163-residue protein sequence, read N- to C-terminus: Phosphopantetheine adenylyltransferase (163 aa).

Position 8 (Ser-8) interacts with substrate. ATP-binding positions include 8–9 (SF) and His-16. The substrate site is built by Lys-40, Thr-72, and Arg-86. Residues 87–89 (GLR), Glu-97, and 122–128 (HSFLSSS) each bind ATP.

Belongs to the bacterial CoaD family. Homohexamer. The cofactor is Mg(2+).

It is found in the cytoplasm. It catalyses the reaction (R)-4'-phosphopantetheine + ATP + H(+) = 3'-dephospho-CoA + diphosphate. The protein operates within cofactor biosynthesis; coenzyme A biosynthesis; CoA from (R)-pantothenate: step 4/5. Functionally, reversibly transfers an adenylyl group from ATP to 4'-phosphopantetheine, yielding dephospho-CoA (dPCoA) and pyrophosphate. The chain is Phosphopantetheine adenylyltransferase from Parasynechococcus marenigrum (strain WH8102).